The primary structure comprises 129 residues: NHP2-like protein 1 homolog (129 aa).

This sequence belongs to the eukaryotic ribosomal protein eL8 family.

It is found in the nucleus. The protein resides in the nucleolus. In terms of biological role, binds to the 5'-stem-loop of U4 snRNA and may play a role in the late stage of spliceosome assembly. The protein undergoes a conformational change upon RNA-binding. The sequence is that of NHP2-like protein 1 homolog from Dictyostelium discoideum (Social amoeba).